The following is a 135-amino-acid chain: CDGSH iron-sulfur domain-containing protein 2 (135 aa).

Over 1–37 (MVLDSVARIVKVQLPAYLKQLPVPDSITGFARLTVSD) the chain is Lumenal. A helical transmembrane segment spans residues 38–60 (WLRLLPFLGVLALLGYLAVRPFF). Over 61–135 (PKKKQQKDSL…GPLILKKKEV (75 aa)) the chain is Cytoplasmic. [2Fe-2S] cluster contacts are provided by C99, C101, C110, and H114.

It belongs to the CISD protein family. CISD2 subfamily. Homodimer. Interacts with BCL2; the interaction is direct and disrupted by BIK interaction with BCL2. Interacts with BCL2L1. Interacts with ITPR1. The cofactor is [2Fe-2S] cluster. As to expression, brain.

It localises to the endoplasmic reticulum membrane. The protein resides in the mitochondrion outer membrane. In terms of biological role, regulator of autophagy that contributes to antagonize BECN1-mediated cellular autophagy at the endoplasmic reticulum. Participates in the interaction of BCL2 with BECN1 and is required for BCL2-mediated depression of endoplasmic reticulum Ca(2+) stores during autophagy. Contributes to BIK-initiated autophagy, while it is not involved in BIK-dependent activation of caspases. Involved in life span control, probably via its function as regulator of autophagy. In Mus musculus (Mouse), this protein is CDGSH iron-sulfur domain-containing protein 2 (Cisd2).